The primary structure comprises 495 residues: D-hydantoinase/dihydropyrimidinase (495 aa).

Zn(2+) is bound by residues histidine 59, histidine 61, and lysine 150. Lysine 150 is subject to N6-carboxylysine. Tyrosine 155 is a substrate binding site. The Zn(2+) site is built by histidine 183 and histidine 239. Serine 289 serves as a coordination point for substrate. Zn(2+) is bound at residue aspartate 316. Asparagine 337 lines the substrate pocket.

Belongs to the metallo-dependent hydrolases superfamily. Hydantoinase/dihydropyrimidinase family. As to quaternary structure, homotetramer. Requires Zn(2+) as cofactor. Carboxylation allows a single lysine to coordinate two zinc ions.

It carries out the reaction 5,6-dihydrouracil + H2O = 3-(carbamoylamino)propanoate + H(+). Catalyzes the hydrolysis of dihydropyrimidines and of the structurally related DL-5-mono-substituted hydantoins, to produce N-carbamoyl-D-amino acids. The polypeptide is D-hydantoinase/dihydropyrimidinase (Pseudomonas putida (Arthrobacter siderocapsulatus)).